Here is a 330-residue protein sequence, read N- to C-terminus: 5-dehydro-2-deoxygluconokinase (330 aa).

The protein belongs to the carbohydrate kinase PfkB family.

It carries out the reaction 5-dehydro-2-deoxy-D-gluconate + ATP = 6-phospho-5-dehydro-2-deoxy-D-gluconate + ADP + H(+). It functions in the pathway polyol metabolism; myo-inositol degradation into acetyl-CoA; acetyl-CoA from myo-inositol: step 5/7. In terms of biological role, catalyzes the phosphorylation of 5-dehydro-2-deoxy-D-gluconate (2-deoxy-5-keto-D-gluconate or DKG) to 6-phospho-5-dehydro-2-deoxy-D-gluconate (DKGP). This Bacillus velezensis (strain DSM 23117 / BGSC 10A6 / LMG 26770 / FZB42) (Bacillus amyloliquefaciens subsp. plantarum) protein is 5-dehydro-2-deoxygluconokinase.